Here is a 171-residue protein sequence, read N- to C-terminus: UPF0763 protein KHP_0657 (171 aa).

It belongs to the UPF0763 family.

This chain is UPF0763 protein KHP_0657, found in Helicobacter pylori (strain 51).